The chain runs to 173 residues: MSIILGIDPGSRITGYGVIRQVGRQLTYLGSGCIRTKVDDLPSRLKLIYAGVSEIITQFQPDFFAIEQVFMAKNADSALKLGQARGVAIVAAVNQDLPVFEYAARQVKQTVVGTGGAAKSQVQHMVRTLLKLQANPQADAADALAIAITHCHVTQNSMQMSESRLSLARGRLR.

Active-site residues include D8, E67, and D139. Mg(2+) is bound by residues D8, E67, and D139.

Belongs to the RuvC family. In terms of assembly, homodimer which binds Holliday junction (HJ) DNA. The HJ becomes 2-fold symmetrical on binding to RuvC with unstacked arms; it has a different conformation from HJ DNA in complex with RuvA. In the full resolvosome a probable DNA-RuvA(4)-RuvB(12)-RuvC(2) complex forms which resolves the HJ. Requires Mg(2+) as cofactor.

Its subcellular location is the cytoplasm. It catalyses the reaction Endonucleolytic cleavage at a junction such as a reciprocal single-stranded crossover between two homologous DNA duplexes (Holliday junction).. Its function is as follows. The RuvA-RuvB-RuvC complex processes Holliday junction (HJ) DNA during genetic recombination and DNA repair. Endonuclease that resolves HJ intermediates. Cleaves cruciform DNA by making single-stranded nicks across the HJ at symmetrical positions within the homologous arms, yielding a 5'-phosphate and a 3'-hydroxyl group; requires a central core of homology in the junction. The consensus cleavage sequence is 5'-(A/T)TT(C/G)-3'. Cleavage occurs on the 3'-side of the TT dinucleotide at the point of strand exchange. HJ branch migration catalyzed by RuvA-RuvB allows RuvC to scan DNA until it finds its consensus sequence, where it cleaves and resolves the cruciform DNA. This is Crossover junction endodeoxyribonuclease RuvC from Enterobacter sp. (strain 638).